The following is a 427-amino-acid chain: MTWFIDRRLNGKNKSMVNRQRFLRRYKAQIKQSISEAINKRSVTDVDSGESVSIPTEDISEPMFHQGRGGLRHRVHPGNDHFVQNDRIERPQGGGGGSGSGQGQASQDGEGQDEFVFQISKDEYLDLLFEDLALPNLKQNQQRQLTEYKTHRAGYTANGVPANISVVRSLQNSLARRTAMTAGKRRELHALEENLAIISNSEPAQLLEEERLRKEIAELRAKIERVPFIDTFDLRYKNYEKRPDPSSQAVMFCLMDVSGSMDQSTKDMAKRFYILLYLFLSRTYKNVEVVYIRHHTQAKEVDEHEFFYSQETGGTIVSSALKLMDEVVKERYNPAQWNIYAAQASDGDNWADDSPLCHEILAKKLLPVVRYYSYIEITRRAHQTLWREYEHLQSTFDNFAMQHIRDQDDIYPVFRELFHKQNATAKG.

Over residues 79–90 (NDHFVQNDRIER) the composition is skewed to basic and acidic residues. The tract at residues 79-110 (NDHFVQNDRIERPQGGGGGSGSGQGQASQDGE) is disordered. A compositionally biased stretch (gly residues) spans 92–102 (QGGGGGSGSGQ).

Belongs to the UPF0229 family.

This is UPF0229 protein YeaH from Escherichia coli (strain K12 / MC4100 / BW2952).